The sequence spans 246 residues: Neuromodulin (246 aa).

The interval 1-246 (MLCCMRRTKQ…EESKADQENA (246 aa)) is disordered. 2 S-palmitoyl cysteine lipidation sites follow: Cys-3 and Cys-4. Basic and acidic residues predominate over residues 9-33 (KQVEKNEDGDQKIEQDGIKPEDKAH). In terms of domain architecture, IQ spans 32–61 (AHKAATKIQASFRGHITRKKLKGEKKADAP). Composition is skewed to low complexity over residues 87-99 (ASAA…ADSA) and 125-157 (SEQP…KAST). Positions 164 to 176 (KADEAQDKEEPKQ) are enriched in basic and acidic residues. Residues 177–203 (ADVPAADTTATTTPAAEDATAKATAQP) show a composition bias toward low complexity. Basic and acidic residues-rich tracts occupy residues 213–225 (TEEK…ETKP) and 237–246 (EESKADQENA).

The protein belongs to the neuromodulin family. In terms of assembly, binds calmodulin with a greater affinity in the absence of Ca(2+) than in its presence. In terms of processing, palmitoylated. Palmitoylation is essential for plasma membrane association. Expressed in neurons.

It localises to the cell membrane. It is found in the cell projection. The protein localises to the growth cone membrane. The protein resides in the synapse. Its subcellular location is the filopodium membrane. Functionally, this protein is associated with nerve growth. It is a major component of the motile 'growth cones' that form the tips of elongating axons. Plays a role in axonal and dendritic filopodia induction. This is Neuromodulin (GAP43) from Gallus gallus (Chicken).